Reading from the N-terminus, the 1139-residue chain is Liprin-alpha (1139 aa).

Coiled-coil stretches lie at residues 30-144, 172-298, 329-517, and 655-701; these read PSDR…SLRM, EHHK…KNQI, IRDL…AQFQ, and QDAQ…EFYD. Disordered regions lie at residues 700-720 and 764-847; these read YDDQ…LDNM and NQFD…DRRK. Polar residues-rich tracts occupy residues 704–719 and 778–787; these read GIST…QLDN and PASSVASSTD. 3 SAM domains span residues 867–933, 952–1016, and 1040–1109; these read WNGP…MVSL, NHEY…LKKV, and WSNE…LVND.

It belongs to the liprin family. Liprin-alpha subfamily. As to expression, detected in vulval muscle and other cells near the vulva; in neurons located in the lateral ganglion, posterior ganglion, ventral cord and lateral body; and in pharyngeal and body wall muscle cells.

The protein localises to the synapse. Its function is as follows. May play a role in regulating the structure of the neuronal region, called the active zone, from which synaptic vesicles send neurotransmitter signals across the synapse. This may be in association with the liprin-beta protein hlb-1. The chain is Liprin-alpha from Caenorhabditis elegans.